The following is a 150-amino-acid chain: Lipoprotein signal peptidase (150 aa).

The next 3 membrane-spanning stretches (helical) occupy residues 8–28, 58–78, and 81–101; these read FYAL…LAHA, GFSW…GWFL, and TTGS…NVFD. Catalysis depends on residues D116 and D132. The chain crosses the membrane as a helical span at residues 126–146; the sequence is VVFNIADLFILAGVFGTFLFL.

This sequence belongs to the peptidase A8 family.

Its subcellular location is the cell membrane. The enzyme catalyses Release of signal peptides from bacterial membrane prolipoproteins. Hydrolyzes -Xaa-Yaa-Zaa-|-(S,diacylglyceryl)Cys-, in which Xaa is hydrophobic (preferably Leu), and Yaa (Ala or Ser) and Zaa (Gly or Ala) have small, neutral side chains.. Its pathway is protein modification; lipoprotein biosynthesis (signal peptide cleavage). This protein specifically catalyzes the removal of signal peptides from prolipoproteins. This is Lipoprotein signal peptidase from Tropheryma whipplei (strain TW08/27) (Whipple's bacillus).